The sequence spans 385 residues: Pre-mRNA-splicing factor slt-11 (385 aa).

A disordered region spans residues 157–233 (RKGREVDEEG…PPGPKDWLPP (77 aa)). Residues 171-187 (GSSSGAGRATGGNPAVG) show a composition bias toward low complexity. One can recognise an RRM domain in the interval 239 to 312 (MSLFVTGIED…CPLRVRWSVP (74 aa)). Positions 320–331 (KEQRSEMLRDGR) are enriched in basic and acidic residues. Residues 320 to 370 (KEQRSEMLRDGRSAFGSGQKTGGQKAIGGQNAQGGASGAQKDDASNLTIAA) form a disordered region.

The protein belongs to the SLT11 family. In terms of assembly, associated with the spliceosome.

Its subcellular location is the nucleus. Its function is as follows. Involved in pre-mRNA splicing. Facilitates the cooperative formation of U2/U6 helix II in association with stem II in the spliceosome. Binds to RNA. The chain is Pre-mRNA-splicing factor slt-11 (slt-11) from Neurospora crassa (strain ATCC 24698 / 74-OR23-1A / CBS 708.71 / DSM 1257 / FGSC 987).